Consider the following 218-residue polypeptide: Eukaryotic translation initiation factor 4E-1 (218 aa).

Positions 1-39 (MAEETDTRPASAGSRGRPAPEDDDREEGEITDLACAPSP) are disordered. Acidic residues predominate over residues 21-30 (EDDDREEGEI). EIF4G-binding regions lie at residues 43-46 (HPLE) and 53-89 (FDNPQSKSKQAAWGSSIRPIHTFSTVEEFWGLYNNIN). MRNA is bound by residues 61–66 (KQAAWG), K93, and 111–112 (WE). A disulfide bridge connects residues C116 and C154. The EIF4G-binding stretch occupies residues 137 to 146 (HTLLAMIGEQ). Residues 161 to 166 (RGKQER) and 206 to 210 (KKMDK) contribute to the mRNA site.

Belongs to the eukaryotic initiation factor 4E family. In terms of assembly, EIF4F is a multi-subunit complex, the composition of which varies with external and internal environmental conditions. It is composed of at least EIF4A, EIF4E and EIF4G. EIF4E is also known to interact with other partners. In higher plants two isoforms of EIF4F have been identified, named isoform EIF4F and isoform EIF(iso)4F. Isoform EIF4F has subunits p220 and p26, whereas isoform EIF(iso)4F has subunits p82 and p28. In terms of processing, according to the redox status, the Cys-116-Cys-154 disulfide bridge may have a role in regulating protein function by affecting its ability to bind capped mRNA. Phosphorylated upon oxygen deprivation.

The protein localises to the nucleus. It is found in the cytoplasm. Component of the protein complex eIF4F, which is involved in the recognition of the mRNA cap, ATP-dependent unwinding of 5'-terminal secondary structure and recruitment of mRNA to the ribosome. Recognizes and binds the 7-methylguanosine-containing mRNA cap during an early step in the initiation of protein synthesis and facilitates ribosome binding by inducing the unwinding of the mRNAs secondary structures. The chain is Eukaryotic translation initiation factor 4E-1 from Zea mays (Maize).